The sequence spans 387 residues: uncharacterized protein (387 aa).

Its subcellular location is the virion. This is an uncharacterized protein from Acanthamoeba polyphaga (Amoeba).